The following is a 601-amino-acid chain: Elongation factor 4 (601 aa).

The tr-type G domain occupies 5–187 (ENIRNFCIVA…AIITTFPPPK (183 aa)). GTP contacts are provided by residues 17–22 (DHGKST) and 134–137 (NKID).

This sequence belongs to the TRAFAC class translation factor GTPase superfamily. Classic translation factor GTPase family. LepA subfamily.

It is found in the cell inner membrane. The enzyme catalyses GTP + H2O = GDP + phosphate + H(+). In terms of biological role, required for accurate and efficient protein synthesis under certain stress conditions. May act as a fidelity factor of the translation reaction, by catalyzing a one-codon backward translocation of tRNAs on improperly translocated ribosomes. Back-translocation proceeds from a post-translocation (POST) complex to a pre-translocation (PRE) complex, thus giving elongation factor G a second chance to translocate the tRNAs correctly. Binds to ribosomes in a GTP-dependent manner. This is Elongation factor 4 from Treponema denticola (strain ATCC 35405 / DSM 14222 / CIP 103919 / JCM 8153 / KCTC 15104).